Reading from the N-terminus, the 357-residue chain is Uroporphyrinogen decarboxylase (357 aa).

Substrate-binding positions include 27–31 (RQAGR), Asp-77, Tyr-154, Thr-209, and His-327.

Belongs to the uroporphyrinogen decarboxylase family. Homodimer.

It is found in the cytoplasm. The catalysed reaction is uroporphyrinogen III + 4 H(+) = coproporphyrinogen III + 4 CO2. Its pathway is porphyrin-containing compound metabolism; protoporphyrin-IX biosynthesis; coproporphyrinogen-III from 5-aminolevulinate: step 4/4. Catalyzes the decarboxylation of four acetate groups of uroporphyrinogen-III to yield coproporphyrinogen-III. The sequence is that of Uroporphyrinogen decarboxylase from Nitrosococcus oceani (strain ATCC 19707 / BCRC 17464 / JCM 30415 / NCIMB 11848 / C-107).